A 355-amino-acid chain; its full sequence is Beta-1,2-mannobiose phosphorylase (355 aa).

Beta-D-Manp-(1-&gt;2)-beta-D-Manp-(1-&gt;2)-D-Manp contacts are provided by residues Asn-31, Arg-46, Arg-89, 140-141 (ED), Lys-188, Tyr-273, and Asp-333.

This sequence belongs to the glycosyl hydrolase 130 family. Homodimer.

The enzyme catalyses beta-D-mannopyranosyl-(1-&gt;2)-D-mannopyranose + phosphate = alpha-D-mannose 1-phosphate + D-mannose. Catalyzes the reversible phosphorolysis of 1,2-beta-oligomannan. In phosphorolytic reactions, prefers beta-1,2-mannobiose (beta-1,2-Man2) as substrate, but can also use beta-1,2-mannotriose. This is Beta-1,2-mannobiose phosphorylase from Listeria innocua serovar 6a (strain ATCC BAA-680 / CLIP 11262).